A 79-amino-acid polypeptide reads, in one-letter code: Sec-independent protein translocase protein TatA (79 aa).

A helical transmembrane segment spans residues 1 to 21 (MGGFTSIWHWVIVLLVIVLLF). The disordered stretch occupies residues 48–79 (EEEAKNEPKTLDAQVAQTKVHETSEIKSKQES). A compositionally biased stretch (basic and acidic residues) spans 66–79 (KVHETSEIKSKQES).

This sequence belongs to the TatA/E family. The Tat system comprises two distinct complexes: a TatABC complex, containing multiple copies of TatA, TatB and TatC subunits, and a separate TatA complex, containing only TatA subunits. Substrates initially bind to the TatABC complex, which probably triggers association of the separate TatA complex to form the active translocon.

The protein resides in the cell inner membrane. In terms of biological role, part of the twin-arginine translocation (Tat) system that transports large folded proteins containing a characteristic twin-arginine motif in their signal peptide across membranes. TatA could form the protein-conducting channel of the Tat system. This chain is Sec-independent protein translocase protein TatA, found in Helicobacter pylori (strain Shi470).